We begin with the raw amino-acid sequence, 228 residues long: UPF0173 metal-dependent hydrolase RBAM_026340 (228 aa).

The protein belongs to the UPF0173 family.

This chain is UPF0173 metal-dependent hydrolase RBAM_026340, found in Bacillus velezensis (strain DSM 23117 / BGSC 10A6 / LMG 26770 / FZB42) (Bacillus amyloliquefaciens subsp. plantarum).